An 84-amino-acid chain; its full sequence is Sulfur carrier protein TusA (84 aa).

The active-site Cysteine persulfide intermediate is the Cys19.

Belongs to the sulfur carrier protein TusA family. As to quaternary structure, interacts with IscS.

The protein localises to the cytoplasm. It participates in tRNA modification. Its function is as follows. Sulfur carrier protein involved in sulfur trafficking in the cell. Part of a sulfur-relay system required for 2-thiolation during synthesis of 2-thiouridine of the modified wobble base 5-methylaminomethyl-2-thiouridine (mnm(5)s(2)U) in tRNA. Interacts with IscS and stimulates its cysteine desulfurase activity. Accepts an activated sulfur from IscS, which is then transferred to TusD, and thus determines the direction of sulfur flow from IscS to 2-thiouridine formation. Also appears to be involved in sulfur transfer for the biosynthesis of molybdopterin. This Yersinia pseudotuberculosis serotype O:1b (strain IP 31758) protein is Sulfur carrier protein TusA.